A 391-amino-acid chain; its full sequence is RAB6A-GEF complex partner protein 2 (391 aa).

This sequence belongs to the RGP1 family. In terms of assembly, forms a complex with RIC1; the interaction enhances RAB6A GTPase activity. Interacts with RIC1. Interacts with RAB6A; the interaction is direct with a preference for RAB6A-GDP. Interacts with RAB33B.

The protein localises to the cytoplasm. It localises to the cytosol. Its subcellular location is the membrane. The RIC1-RGP1 complex acts as a guanine nucleotide exchange factor (GEF), which activates RAB6A by exchanging bound GDP for free GTP and may thereby required for efficient fusion of endosome-derived vesicles with the Golgi compartment. The RIC1-RGP1 complex participates in the recycling of mannose-6-phosphate receptors. This Homo sapiens (Human) protein is RAB6A-GEF complex partner protein 2.